The following is a 123-amino-acid chain: NADH-quinone oxidoreductase subunit A (123 aa).

The next 3 helical transmembrane spans lie at 11–31 (YLPIAIFFGIALLVSGLIMIL), 68–88 (LVAILFIIFDLEIAFLVPWAI), and 93–113 (IGKIGFFSMIFFLFVLTIGFI).

Belongs to the complex I subunit 3 family. As to quaternary structure, NDH-1 is composed of 14 different subunits. Subunits NuoA, H, J, K, L, M, N constitute the membrane sector of the complex.

The protein localises to the cell inner membrane. The enzyme catalyses a quinone + NADH + 5 H(+)(in) = a quinol + NAD(+) + 4 H(+)(out). Functionally, NDH-1 shuttles electrons from NADH, via FMN and iron-sulfur (Fe-S) centers, to quinones in the respiratory chain. The immediate electron acceptor for the enzyme in this species is believed to be ubiquinone. Couples the redox reaction to proton translocation (for every two electrons transferred, four hydrogen ions are translocated across the cytoplasmic membrane), and thus conserves the redox energy in a proton gradient. The polypeptide is NADH-quinone oxidoreductase subunit A (Rickettsia felis (strain ATCC VR-1525 / URRWXCal2) (Rickettsia azadi)).